A 233-amino-acid polypeptide reads, in one-letter code: Syntaxin-52 (233 aa).

The Cytoplasmic portion of the chain corresponds to 1–209; it reads MASSSDPWMR…NKSMKSGCSC (209 aa). The t-SNARE coiled-coil homology domain occupies 137 to 199; the sequence is RQVMREQDEG…RRVQKSLALM (63 aa). Residues 210–230 form a helical; Anchor for type IV membrane protein membrane-spanning segment; that stretch reads MSMLLSVLGIVGLALVIWLLV. Topologically, residues 231-233 are vesicular; that stretch reads KYL.

It belongs to the syntaxin family. As to quaternary structure, interacts either with VTI11 and SYP21, or with VTI11 and SYP22 in the prevacuolar compartment, or with VTI12 and SYP61 in the trans-Golgi network to form t-SNARE complexes. In terms of tissue distribution, expressed in root, leaf, stem, flower and silique.

It is found in the golgi apparatus. Its subcellular location is the trans-Golgi network membrane. The protein resides in the prevacuolar compartment membrane. Its function is as follows. Vesicle trafficking protein that functions in the secretory pathway. The polypeptide is Syntaxin-52 (SYP52) (Arabidopsis thaliana (Mouse-ear cress)).